We begin with the raw amino-acid sequence, 165 residues long: Disulfide bond formation protein B (165 aa).

Residues 1–16 (MTILNSLNQFSKGRLS) lie on the Cytoplasmic side of the membrane. The helical transmembrane segment at 17-33 (WLLLLLFVVFFEACALY) threads the bilayer. Over 34-51 (FQHVMMLAPCVMCIYERV) the chain is Periplasmic. An intrachain disulfide couples C43 to C46. The chain crosses the membrane as a helical span at residues 52–67 (AMMGVGVAAIVGLMAP). Over 68–74 (NNPIFRW) the chain is Cytoplasmic. A helical transmembrane segment spans residues 75 to 92 (LGLIGWGLSSYKGLLLAQ). Residues 93-147 (QHVDYQFNPSPFATCDLFVTFPSWRPLNQWAPWIFEAYGDCSKIVWQFLDLSMPQ) lie on the Periplasmic side of the membrane. A disulfide bridge links C107 with C133. A helical membrane pass occupies residues 148–165 (WLVVIFAGNLIALALIVI).

It belongs to the DsbB family.

The protein resides in the cell inner membrane. Required for disulfide bond formation in some periplasmic proteins. Acts by oxidizing the DsbA protein. The chain is Disulfide bond formation protein B from Vibrio alginolyticus.